The primary structure comprises 176 residues: Ribosome maturation factor RimM (176 aa).

One can recognise a PRC barrel domain in the interval 97-176 (EDEFYWRDLI…QILVDWDPDF (80 aa)).

This sequence belongs to the RimM family. In terms of assembly, binds ribosomal protein uS19.

The protein resides in the cytoplasm. Its function is as follows. An accessory protein needed during the final step in the assembly of 30S ribosomal subunit, possibly for assembly of the head region. Essential for efficient processing of 16S rRNA. May be needed both before and after RbfA during the maturation of 16S rRNA. It has affinity for free ribosomal 30S subunits but not for 70S ribosomes. The sequence is that of Ribosome maturation factor RimM from Shewanella halifaxensis (strain HAW-EB4).